Here is a 255-residue protein sequence, read N- to C-terminus: 5'-nucleotidase SurE (255 aa).

A divalent metal cation-binding residues include Asp8, Asp9, Ser39, and Asn95.

This sequence belongs to the SurE nucleotidase family. A divalent metal cation is required as a cofactor.

Its subcellular location is the cytoplasm. The catalysed reaction is a ribonucleoside 5'-phosphate + H2O = a ribonucleoside + phosphate. Functionally, nucleotidase that shows phosphatase activity on nucleoside 5'-monophosphates. This Herpetosiphon aurantiacus (strain ATCC 23779 / DSM 785 / 114-95) protein is 5'-nucleotidase SurE.